The primary structure comprises 381 residues: 4-hydroxy-3-methylbut-2-en-1-yl diphosphate synthase (flavodoxin) (381 aa).

[4Fe-4S] cluster is bound by residues Cys-280, Cys-283, Cys-315, and Glu-322.

Belongs to the IspG family. The cofactor is [4Fe-4S] cluster.

The catalysed reaction is (2E)-4-hydroxy-3-methylbut-2-enyl diphosphate + oxidized [flavodoxin] + H2O + 2 H(+) = 2-C-methyl-D-erythritol 2,4-cyclic diphosphate + reduced [flavodoxin]. The protein operates within isoprenoid biosynthesis; isopentenyl diphosphate biosynthesis via DXP pathway; isopentenyl diphosphate from 1-deoxy-D-xylulose 5-phosphate: step 5/6. Functionally, converts 2C-methyl-D-erythritol 2,4-cyclodiphosphate (ME-2,4cPP) into 1-hydroxy-2-methyl-2-(E)-butenyl 4-diphosphate. The sequence is that of 4-hydroxy-3-methylbut-2-en-1-yl diphosphate synthase (flavodoxin) from Clavibacter michiganensis subsp. michiganensis (strain NCPPB 382).